The sequence spans 252 residues: MKTVTVKDLVIGTGAPKIIVSLMAKDIASVKSEALAYREADFDILEWRVDHYADLSNVESVLAAAKILRETMPEKPLLFTFRSAKEGGEQAISTEAYIALNRAAIDSGLVDMIDLELFTGDDQVKETVAYAHAHDVKVVMSNHDFHKTPEAEEIIARLRKMQSFDADIPKIALMPQSTSDVLTLLAATLEMQEQYADRPIITMSMAKTGVISRLAGEVFGSAATFGAVKKASAPGQISVNDLRTVLTILHQA.

Residues Ser-21, Glu-46–Arg-48, and Arg-82 contribute to the 3-dehydroquinate site. The active-site Proton donor/acceptor is the His-143. Lys-170 acts as the Schiff-base intermediate with substrate in catalysis. 3-dehydroquinate contacts are provided by Arg-213, Ser-232, and Gln-236.

This sequence belongs to the type-I 3-dehydroquinase family. Homodimer.

The enzyme catalyses 3-dehydroquinate = 3-dehydroshikimate + H2O. It functions in the pathway metabolic intermediate biosynthesis; chorismate biosynthesis; chorismate from D-erythrose 4-phosphate and phosphoenolpyruvate: step 3/7. Its function is as follows. Involved in the third step of the chorismate pathway, which leads to the biosynthesis of aromatic amino acids. Catalyzes the cis-dehydration of 3-dehydroquinate (DHQ) and introduces the first double bond of the aromatic ring to yield 3-dehydroshikimate. The polypeptide is 3-dehydroquinate dehydratase (Escherichia coli O7:K1 (strain IAI39 / ExPEC)).